The primary structure comprises 603 residues: MSFDAKAFLATLTELPGVYRMLDIGGNVLYVGKAKNLKKRVASYFRENLSSPRIAHMVSQIASIETTATRTEAEALLLENNLIKSLAPRYNILFRDDKSYPYIVLSKGKFPRLGFFRGNPDRKADYFGPYPSSWAVRDSIHLMQKMFRLRTCEDTVFSNRSRPCLLYQIKRCSGPCVGFISADDYAADIQLAAMFLLGKQQEVTRRLTKSMEEASAKLAFEQAAVFRDQIQSLHQVQEKQFVSSSKGEDVDVLVAIKEAGQLCVNLAMVRGGRHLGDRPFFPTNAADSEPSDACAAFIRQHYAAHPAPARILSYPLPSEDEAGETEVALAELAGRPVPVQEGRGATHKAWVEMAIQNARLAILAKNQATAQQEQRLAALQDALQLPEPIARIECFDISHTMGEATVASCVVYEGNRMKKSDYRRFNIRDIQAGDDYAAMRQAVSRRYDSIAGGEGTAPDLILIDGGKGQVSSAFSALADLGLTHLPMIGVAKGEERKPGLETLIFPEGREPLQLPPQHPALHLIQEIRDEAHRFAITGHRAQRGKARKTSKLESLPGIGPARRKALVARFGGLPGVLAASIDQLAEVPGVSREMAEKIHSALH.

Residues glutamate 14–isoleucine 92 enclose the GIY-YIG domain. The UVR domain occupies glutamine 201–valine 236.

This sequence belongs to the UvrC family. In terms of assembly, interacts with UvrB in an incision complex.

It is found in the cytoplasm. In terms of biological role, the UvrABC repair system catalyzes the recognition and processing of DNA lesions. UvrC both incises the 5' and 3' sides of the lesion. The N-terminal half is responsible for the 3' incision and the C-terminal half is responsible for the 5' incision. This chain is UvrABC system protein C, found in Dechloromonas aromatica (strain RCB).